Reading from the N-terminus, the 228-residue chain is Lipoprotein-releasing system ATP-binding protein LolD (228 aa).

In terms of domain architecture, ABC transporter spans 9 to 228 (LEAHDIQKNF…ELINGCLYRR (220 aa)). 44–51 (GRSGEGKS) provides a ligand contact to ATP.

This sequence belongs to the ABC transporter superfamily. Lipoprotein translocase (TC 3.A.1.125) family. The complex is composed of two ATP-binding proteins (LolD) and two transmembrane proteins (LolC and LolE).

It is found in the cell inner membrane. Part of the ABC transporter complex LolCDE involved in the translocation of mature outer membrane-directed lipoproteins, from the inner membrane to the periplasmic chaperone, LolA. Responsible for the formation of the LolA-lipoprotein complex in an ATP-dependent manner. This Protochlamydia amoebophila (strain UWE25) protein is Lipoprotein-releasing system ATP-binding protein LolD.